The chain runs to 390 residues: Peroxisomal sarcosine oxidase (390 aa).

Residue 9–39 coordinates FAD; the sequence is DAIVIGAGIQGCFTAYHLAKHSKSVLLLEQF. Lys126 and Lys287 each carry N6-acetyllysine. Cys319 carries the post-translational modification S-8alpha-FAD cysteine. Positions 388–390 match the Microbody targeting signal motif; sequence AHL.

This sequence belongs to the MSOX/MTOX family. Requires FAD as cofactor. As to expression, kidney and liver.

The protein resides in the peroxisome. The enzyme catalyses sarcosine + O2 + H2O = formaldehyde + glycine + H2O2. The catalysed reaction is L-pipecolate + O2 = L-1-piperideine-6-carboxylate + H2O2 + H(+). Functionally, metabolizes sarcosine, L-pipecolic acid and L-proline. In Mus musculus (Mouse), this protein is Peroxisomal sarcosine oxidase (Pipox).